Consider the following 239-residue polypeptide: Glutathione S-transferase verG (239 aa).

The 84-residue stretch at 18-101 (KPLIFVMEGR…YLSNKYDAKR (84 aa)) folds into the GST N-terminal domain. The GST C-terminal domain occupies 107–237 (NAAENLEICN…ELDSRKEIAI (131 aa)).

This sequence belongs to the GST superfamily.

It carries out the reaction RX + glutathione = an S-substituted glutathione + a halide anion + H(+). It functions in the pathway mycotoxin biosynthesis. In terms of biological role, glutathione S-transferase; part of the gene cluster that mediates the biosynthesis of 11'-deoxyverticillin A, one of the dimeric epipolythiodioxopiperazines (ETPs) from the verticillin family that act as mycotoxins. 11'-deoxyverticillin A is required for normal conidiation. The nonribosomal peptide synthetase verP is speculated to be responsible for condensation of amino acids to form the carbon skeleton of verticillin, whereas the cluster-specific tailoring enzymes are involved in further modifications leading to the production of 11'-deoxyverticillin A. This Clonostachys rogersoniana protein is Glutathione S-transferase verG.